The sequence spans 320 residues: BTB and MATH domain-containing protein 36 (320 aa).

One can recognise an MATH domain in the interval 7–136 (KGSIRFEIQN…DKHAVLEVQI (130 aa)). Residues 160–227 (TDVVLVLEGK…IYPTHMLINS (68 aa)) form the BTB domain.

This Caenorhabditis elegans protein is BTB and MATH domain-containing protein 36 (bath-36).